The sequence spans 366 residues: Galactoside alpha-(1,2)-fucosyltransferase 1 (366 aa).

Residues 1 to 8 (MWPPSHRQ) lie on the Cytoplasmic side of the membrane. The chain crosses the membrane as a helical; Signal-anchor for type II membrane protein span at residues 9–25 (LCLAFLLVCVLSVISFF). Topologically, residues 26–366 (LHIHQDSFPH…LSSLWTLAKP (341 aa)) are lumenal. N-linked (GlcNAc...) asparagine glycans are attached at residues asparagine 66, asparagine 302, and asparagine 328.

This sequence belongs to the glycosyltransferase 11 family.

It is found in the golgi apparatus. It localises to the golgi stack membrane. The catalysed reaction is a beta-D-galactosyl-(1-&gt;4)-N-acetyl-beta-D-glucosaminyl derivative + GDP-beta-L-fucose = an alpha-L-Fuc-(1-&gt;2)-beta-D-Gal-(1-&gt;4)-beta-D-GlcNAc derivative + GDP + H(+). It catalyses the reaction a ganglioside GA1 + GDP-beta-L-fucose = a ganglioside Fuc-GA1 + GDP + H(+). The enzyme catalyses a beta-D-Gal-(1-&gt;3)-beta-D-GlcNAc-(1-&gt;3)-beta-D-Gal-(1-&gt;4)-beta-D-Glc-(1&lt;-&gt;1')-Cer(d18:1(4E)) + GDP-beta-L-fucose = alpha-L-fucosyl-(1-&gt;2)- beta-D-galactosyl-(1-&gt;3)-N-acetyl-beta-D-glucosaminyl-(1-&gt;3)-beta-D-galactosyl-(1-&gt;4)-beta-D-glucosyl-(1&lt;-&gt;1')-N-acylsphing-4-enine + GDP + H(+). It carries out the reaction a neolactoside nLc4Cer(d18:1(4E)) + GDP-beta-L-fucose = a neolactoside IV(2)-alpha-Fuc-nLc4Cer(d18:1(4E)) + GDP + H(+). The catalysed reaction is a ganglioside GM1 + GDP-beta-L-fucose = a ganglioside Fuc-GM1 + GDP + H(+). It catalyses the reaction beta-D-galactosyl-(1-&gt;3)-N-acetyl-D-galactosamine + GDP-beta-L-fucose = alpha-L-fucosyl-(1-&gt;2)-beta-D-galactosyl-(1-&gt;3)-N-acetyl-D-galactosamine + GDP + H(+). Its pathway is protein modification; protein glycosylation. Catalyzes the transfer of L-fucose, from a guanosine diphosphate-beta-L-fucose, to the terminal galactose residue of glycoconjugates through an alpha(1,2) linkage leading to H antigen synthesis that is an intermediate substrate in the synthesis of ABO blood group antigens. H antigen is essential for maturation of the glomerular layer of the main olfactory bulb, in cell migration and early cell-cell contacts during tumor associated angiogenesis. Preferentially fucosylates soluble lactose and to a lesser extent fucosylates glycolipids gangliosides GA1 and GM1a. The polypeptide is Galactoside alpha-(1,2)-fucosyltransferase 1 (Pan troglodytes (Chimpanzee)).